Consider the following 512-residue polypeptide: MVPSQEEPAAERETNEAQPPGPAPSDDAPLPGPGPSDVSDVAAEKVEVELTRSAGSEPPVPPEGGWGWLVMLAAMWCNGSVFGIQNAYGVLFVSMLDTFKAKDDDNMAFKTAWVGSLSMGMIFFCCPIVSVFTDMFGCRRTAVVGAAVGFIGLMSSSFVSSIEPLYLTYGIIFACGCSFAYQPSLVILGHYFKKRLGLVNGIVTAGSSVFTILLPLLLGNLISSVKLFNTLRILCIFMFVLFLAGFTYRPLVPSTKEKESGGSRSSFFSRRKLSPPKKVFNFALFKETTYAVWAAGIPLALFGYFVPYVHLMNHVKERFQDVNNKEVLFMCIGITSGVGRLLFGRIADYLPGVKKVYLQVLSFFFIGLMSMMIPLCSAFGALIAVCLAMGLFDGCFISIMAPIAFELVGPQDASQAIGFLLGFMSIPMTVGPPIAGLLHDKLGTYDVAFYLAGIPPFVGGVVLCLIPWIHSKKQRKISKNAGGEKMEKMLENQSSLLSGSSGIFKKDSASII.

Residues 1 to 44 (MVPSQEEPAAERETNEAQPPGPAPSDDAPLPGPGPSDVSDVAAE) form a disordered region. Topologically, residues 1–63 (MVPSQEEPAA…AGSEPPVPPE (63 aa)) are cytoplasmic. Residues 64-84 (GGWGWLVMLAAMWCNGSVFGI) traverse the membrane as a helical segment. Over 85 to 111 (QNAYGVLFVSMLDTFKAKDDDNMAFKT) the chain is Extracellular. Residues 112 to 132 (AWVGSLSMGMIFFCCPIVSVF) form a helical membrane-spanning segment. Over 133 to 141 (TDMFGCRRT) the chain is Cytoplasmic. Residues 142–162 (AVVGAAVGFIGLMSSSFVSSI) traverse the membrane as a helical segment. Topologically, residues 163–168 (EPLYLT) are extracellular. The helical transmembrane segment at 169-189 (YGIIFACGCSFAYQPSLVILG) threads the bilayer. The Cytoplasmic portion of the chain corresponds to 190–201 (HYFKKRLGLVNG). Residues 202-222 (IVTAGSSVFTILLPLLLGNLI) traverse the membrane as a helical segment. Topologically, residues 223–232 (SSVKLFNTLR) are extracellular. A helical membrane pass occupies residues 233–253 (ILCIFMFVLFLAGFTYRPLVP). The Cytoplasmic portion of the chain corresponds to 254 to 291 (STKEKESGGSRSSFFSRRKLSPPKKVFNFALFKETTYA). The residue at position 260 (serine 260) is a Phosphoserine. The chain crosses the membrane as a helical span at residues 292-312 (VWAAGIPLALFGYFVPYVHLM). Residues 313–326 (NHVKERFQDVNNKE) are Extracellular-facing. The chain crosses the membrane as a helical span at residues 327-347 (VLFMCIGITSGVGRLLFGRIA). The Cytoplasmic segment spans residues 348–362 (DYLPGVKKVYLQVLS). A helical membrane pass occupies residues 363 to 383 (FFFIGLMSMMIPLCSAFGALI). A topological domain (extracellular) is located at residue alanine 384. The helical transmembrane segment at 385–405 (VCLAMGLFDGCFISIMAPIAF) threads the bilayer. Residues 406–416 (ELVGPQDASQA) lie on the Cytoplasmic side of the membrane. Residues 417 to 437 (IGFLLGFMSIPMTVGPPIAGL) traverse the membrane as a helical segment. Topologically, residues 438-448 (LHDKLGTYDVA) are extracellular. Residues 449–469 (FYLAGIPPFVGGVVLCLIPWI) traverse the membrane as a helical segment. Residues 470-512 (HSKKQRKISKNAGGEKMEKMLENQSSLLSGSSGIFKKDSASII) lie on the Cytoplasmic side of the membrane. Serine 495, serine 498, serine 500, and serine 501 each carry phosphoserine.

It belongs to the major facilitator superfamily. Monocarboxylate porter (TC 2.A.1.13) family. Post-translationally, not N-glycosylated. Highly expressed in small intestine, particularly in jejunum and ileum, scarcely in colon and substantially in kidney, liver and skeletal muscle. In the brain expression is low and appears to be restricted to a subset of neurons, microglia cells, and oligodendrocytes.

It is found in the cell membrane. Its subcellular location is the basolateral cell membrane. It catalyses the reaction L-tryptophan(in) = L-tryptophan(out). It carries out the reaction L-tyrosine(in) = L-tyrosine(out). The catalysed reaction is L-phenylalanine(in) = L-phenylalanine(out). The enzyme catalyses 3,3',5-triiodo-L-thyronine(out) = 3,3',5-triiodo-L-thyronine(in). It catalyses the reaction L-thyroxine(out) = L-thyroxine(in). Functionally, sodium- and proton-independent thyroid hormones and aromatic acids transporter. Mediates both uptake and efflux of 3,5,3'-triiodothyronine (T3) and 3,5,3',5'-tetraiodothyronine (T4) with high affinity, suggesting a role in the homeostasis of thyroid hormone levels. Responsible for low affinity bidirectional transport of the aromatic amino acids, such as phenylalanine, tyrosine, tryptophan and L-3,4-dihydroxyphenylalanine (L-dopa). Plays an important role in homeostasis of aromatic amino acids. In Mus musculus (Mouse), this protein is Monocarboxylate transporter 10 (Slc16a10).